The primary structure comprises 351 residues: MVSMEESSVFDYIRENRRTIVLSFLAVAVVIFLIGFFAGFGDILRALEGTSPYFLALNFVLEAIILILWTLRWRLILNVVDDAPSFPRLMMLLFTSIFGNNITPGAAGGEPLRAYLLREVEGTPFEIGFASSTADRVFEFIPFALISILSAVLIMTWEISIWTRIVVSVLILVTIAGFSLAVYAGMNKKIAQRIALSVTRRLVSWFSRFREGGISFAGIHEKVIFYINRFNDGFSTAITDRRVFVIGFFISLGMWALDVCRLYVCFLAVGVSPPAVPLIIIYTVGILISLLPILPGSLGLREGILVGLFAVAGIGADYVMAASVVDRIASYIAPTLIGLIAAIYYGKQMTS.

A run of 8 helical transmembrane segments spans residues 20 to 40 (IVLSFLAVAVVIFLIGFFAGF), 51 to 71 (SPYFLALNFVLEAIILILWTL), 137 to 157 (VFEFIPFALISILSAVLIMTW), 165 to 185 (IVVSVLILVTIAGFSLAVYAG), 244 to 264 (FVIGFFISLGMWALDVCRLYV), 275 to 295 (AVPLIIIYTVGILISLLPILP), 304 to 324 (ILVGLFAVAGIGADYVMAASV), and 328 to 348 (IASYIAPTLIGLIAAIYYGKQ).

Belongs to the UPF0104 family.

The protein localises to the cell membrane. In Methanothermobacter thermautotrophicus (strain ATCC 29096 / DSM 1053 / JCM 10044 / NBRC 100330 / Delta H) (Methanobacterium thermoautotrophicum), this protein is UPF0104 membrane protein MTH_887.